The following is a 137-amino-acid chain: Thioredoxin-like protein R548 (137 aa).

The 136-residue stretch at 2–137 folds into the Thioredoxin domain; sequence SKDSVETNTI…LEKSIVESSQ (136 aa). Catalysis depends on nucleophile residues cysteine 61 and cysteine 64. A disulfide bridge connects residues cysteine 61 and cysteine 64.

This sequence belongs to the thioredoxin family.

Functionally, participates in various redox reactions through the reversible oxidation of its active center dithiol to a disulfide and catalyzes dithiol-disulfide exchange reactions. The sequence is that of Thioredoxin-like protein R548 from Acanthamoeba polyphaga mimivirus (APMV).